Reading from the N-terminus, the 80-residue chain is UPF0291 protein EF_1580 (80 aa).

The interval 60-80 (TDVTPEKLKKIQREKGLHNRK) is disordered. The segment covering 63–80 (TPEKLKKIQREKGLHNRK) has biased composition (basic and acidic residues).

It belongs to the UPF0291 family.

It is found in the cytoplasm. The sequence is that of UPF0291 protein EF_1580 from Enterococcus faecalis (strain ATCC 700802 / V583).